Here is a 141-residue protein sequence, read N- to C-terminus: ATP synthase epsilon chain (141 aa).

The protein belongs to the ATPase epsilon chain family. In terms of assembly, F-type ATPases have 2 components, CF(1) - the catalytic core - and CF(0) - the membrane proton channel. CF(1) has five subunits: alpha(3), beta(3), gamma(1), delta(1), epsilon(1). CF(0) has three main subunits: a, b and c.

It is found in the cell inner membrane. Its function is as follows. Produces ATP from ADP in the presence of a proton gradient across the membrane. In Gluconacetobacter diazotrophicus (strain ATCC 49037 / DSM 5601 / CCUG 37298 / CIP 103539 / LMG 7603 / PAl5), this protein is ATP synthase epsilon chain.